The primary structure comprises 111 residues: Iron-sulfur cluster insertion protein ErpA (111 aa).

3 residues coordinate iron-sulfur cluster: C39, C103, and C105.

The protein belongs to the HesB/IscA family. In terms of assembly, homodimer. Iron-sulfur cluster serves as cofactor.

In terms of biological role, required for insertion of 4Fe-4S clusters for at least IspG. The chain is Iron-sulfur cluster insertion protein ErpA from Buchnera aphidicola subsp. Cinara cedri (strain Cc).